The chain runs to 217 residues: Adenylate kinase (217 aa).

10-15 is a binding site for ATP; sequence GIGKGT. An NMP region spans residues 30–59; the sequence is ATGDIFRKNFQENTPLGKESKKFINKGLLV. AMP-binding positions include T31, R36, 57–59, 85–88, and Q92; these read LLV and GFPR. The tract at residues 126-163 is LID; it reads GRRICSHCGKVYHLDNLPPKIEGICDKDQKKLIQREDD. R127 serves as a coordination point for ATP. Zn(2+) is bound by residues C130 and C133. ATP is bound at residue 136–137; sequence VY. Zn(2+)-binding residues include C150 and D153. AMP is bound by residues R160 and R171. Q199 lines the ATP pocket.

The protein belongs to the adenylate kinase family. Monomer.

It is found in the cytoplasm. The catalysed reaction is AMP + ATP = 2 ADP. It participates in purine metabolism; AMP biosynthesis via salvage pathway; AMP from ADP: step 1/1. Functionally, catalyzes the reversible transfer of the terminal phosphate group between ATP and AMP. Plays an important role in cellular energy homeostasis and in adenine nucleotide metabolism. The protein is Adenylate kinase of Phytoplasma australiense.